A 732-amino-acid polypeptide reads, in one-letter code: Polyribonucleotide nucleotidyltransferase (732 aa).

Mg(2+) contacts are provided by D516 and D522. One can recognise a KH domain in the interval 582-642 (PSSHTITVHP…PKVIAACDYI (61 aa)). The 68-residue stretch at 659–726 (GDILKGKIKR…KGHKIELGLR (68 aa)) folds into the S1 motif domain.

This sequence belongs to the polyribonucleotide nucleotidyltransferase family. Requires Mg(2+) as cofactor.

Its subcellular location is the cytoplasm. The catalysed reaction is RNA(n+1) + phosphate = RNA(n) + a ribonucleoside 5'-diphosphate. Its function is as follows. Involved in mRNA degradation. Catalyzes the phosphorolysis of single-stranded polyribonucleotides processively in the 3'- to 5'-direction. In Nitratiruptor sp. (strain SB155-2), this protein is Polyribonucleotide nucleotidyltransferase.